We begin with the raw amino-acid sequence, 1232 residues long: Chromosome-associated kinesin KIF4A (1232 aa).

The Kinesin motor domain occupies 9–336 (PVRVALRCRP…LRYADRARKI (328 aa)). An ATP-binding site is contributed by 88 to 95 (GQTGSGKT). A coiled-coil region spans residues 350-999 (ELNHLKQQVQ…IKQKLTLLQV (650 aa)). Position 394 is a phosphoserine (serine 394). Residues 496–515 (AQVETSPETSRSSDAFTTQH) form a disordered region. Residues 497–515 (QVETSPETSRSSDAFTTQH) are compositionally biased toward polar residues. Residues 663–1232 (QWKQKKDKEV…GCSPIEEEAH (570 aa)) form a required for the interaction with PRC1 region. Residues 793-798 (PKLRRR) carry the Nuclear localization signal motif. Phosphothreonine is present on threonine 799. Residues serine 801, serine 810, serine 815, and serine 951 each carry the phosphoserine modification. Position 995 is a phosphothreonine (threonine 995). The interval 1000 to 1232 (ASRQKHLPKD…GCSPIEEEAH (233 aa)) is globular. 5 positions are modified to phosphoserine: serine 1001, serine 1013, serine 1017, serine 1028, and serine 1126. The CRD; required for [4Fe-4S] cluster binding and localization to the spindle midzone and midbody during anaphase and telophase stretch occupies residues 1086 to 1144 (CSCKGWCGNKQCGCRKQKSDCGVDCCCDPTKCRNRQQGKDSLGTVERTQDSEGSFKLED). The disordered stretch occupies residues 1122–1142 (QGKDSLGTVERTQDSEGSFKL). Over residues 1132–1142 (RTQDSEGSFKL) the composition is skewed to basic and acidic residues. Phosphothreonine is present on threonine 1181. Serine 1186 is subject to Phosphoserine. A Glycyl lysine isopeptide (Lys-Gly) (interchain with G-Cter in SUMO2) cross-link involves residue lysine 1194. Serine 1225 bears the Phosphoserine mark.

This sequence belongs to the TRAFAC class myosin-kinesin ATPase superfamily. Kinesin family. Chromokinesin subfamily. Interacts with the cytosolic iron-sulfur protein assembly (CIA) complex components CIAO2B and MMS19; the interactions facilitate the transfer of Fe-S clusters to KIF4A to ensure proper localization of KIF4A to mitotic machinery components. Interacts (via C-terminus) with unphosphorylated PRC1 (via N-terminus); the interaction is required for the progression of mitosis. Requires [2Fe-2S] cluster as cofactor. [4Fe-4S] cluster serves as cofactor. In terms of tissue distribution, highly expressed in hematopoietic tissues, fetal liver, spleen, thymus and adult thymus and bone marrow. Lower levels are found in heart, testis, kidney, colon and lung.

The protein localises to the nucleus matrix. It is found in the cytoplasm. It localises to the cytoskeleton. Its subcellular location is the spindle. The protein resides in the midbody. The protein localises to the chromosome. Iron-sulfur (Fe-S) cluster binding motor protein that has a role in chromosome segregation during mitosis. Translocates PRC1 to the plus ends of interdigitating spindle microtubules during the metaphase to anaphase transition, an essential step for the formation of an organized central spindle midzone and midbody and for successful cytokinesis. May play a role in mitotic chromosomal positioning and bipolar spindle stabilization. The chain is Chromosome-associated kinesin KIF4A (KIF4A) from Homo sapiens (Human).